The sequence spans 90 residues: Small ribosomal subunit protein uS17m (90 aa).

The protein belongs to the universal ribosomal protein uS17 family. As to quaternary structure, component of the mitochondrial small ribosomal subunit (mt-SSU). Mature yeast 74S mitochondrial ribosomes consist of a small (37S) and a large (54S) subunit. The 37S small subunit contains a 15S ribosomal RNA (15S mt-rRNA) and at least 32 different proteins. The 54S large subunit contains a 21S rRNA (21S mt-rRNA) and at least 45 different proteins.

The protein localises to the mitochondrion. Its function is as follows. Component of the mitochondrial ribosome (mitoribosome), a dedicated translation machinery responsible for the synthesis of mitochondrial genome-encoded proteins, including at least some of the essential transmembrane subunits of the mitochondrial respiratory chain. The mitoribosomes are attached to the mitochondrial inner membrane and translation products are cotranslationally integrated into the membrane. uS17m may have a meiosis-specific role as it accumulates during the middle stage of sporulation. In Schizosaccharomyces pombe (strain 972 / ATCC 24843) (Fission yeast), this protein is Small ribosomal subunit protein uS17m.